Consider the following 324-residue polypeptide: Taste receptor type 2 member 116 (324 aa).

At 1–2 (MN) the chain is on the extracellular side. Residues 3–23 (GVLYITFTVILSVEVIIGNFG) form a helical membrane-spanning segment. Over 24–55 (NGIIALVNIMDLAKRRKISSVDQILTALAISR) the chain is Cytoplasmic. A helical transmembrane segment spans residues 56 to 76 (IVLLWLVLVSWWLSMFYPGQW). Residues 77–94 (MTEGIDVIVHNVWTTLNQ) lie on the Extracellular side of the membrane. A helical membrane pass occupies residues 95–115 (ISLWLATSFSVFCFLKVANFS). Residues 116–128 (NTIFFYLKIRVKK) lie on the Cytoplasmic side of the membrane. A helical membrane pass occupies residues 129–149 (VMTGTLIMFLLLLGLNIIVIN). At 150–183 (ASKTILIPEYKVNMSNSLNLKNTQISMLFPFANT) the chain is on the extracellular side. Asn-162 is a glycosylation site (N-linked (GlcNAc...) asparagine). Residues 184-204 (LFGFIPFAVSLVTFLLLFFSL) form a helical membrane-spanning segment. The Cytoplasmic segment spans residues 205–236 (WKHQRKMHHGAQGCRDSSTKAHIRVLQTLIAS). Residues 237–257 (ILLYFVFFLSLVVKVWISLFL) traverse the membrane as a helical segment. The Extracellular portion of the chain corresponds to 258–261 (ERML). Residues 262–282 (LLLITQAAKIAFPSLHPWVLI) traverse the membrane as a helical segment. The Cytoplasmic segment spans residues 283–324 (LGNAKLRKASLSALQWLRCRHKDEHRRVQRPEVHSCGSSCMP).

This sequence belongs to the G-protein coupled receptor T2R family.

The protein localises to the membrane. Functionally, putative taste receptor which may play a role in the perception of bitterness. The protein is Taste receptor type 2 member 116 of Rattus norvegicus (Rat).